The sequence spans 787 residues: Mitochondrial 15S rRNA processing factor CCM1 (787 aa).

The N-terminal 12 residues, 1–12, are a transit peptide targeting the mitochondrion; it reads MMLRLSVKKRCM. The segment covering 38 to 48 has biased composition (basic residues); the sequence is QKGKPTLRKSK. The interval 38 to 58 is disordered; that stretch reads QKGKPTLRKSKGSNDGGAVNN. 3 PPR repeats span residues 286–320, 321–356, and 359–393; these read SRET…KLEP, SQKT…SQKT, and DTRA…KIEI.

The protein belongs to the CCM1 family. Binds to mitochondrial small subunit 15S rRNA.

It is found in the mitochondrion. Regulates mitochondrial small subunit maturation by controlling 15S rRNA 5'-end processing. Localizes to the 5' precursor of the 15S rRNA in a position that is subsequently occupied by mS47 in the mature yeast mtSSU. Uses structure and sequence-specific RNA recognition, binding to a single-stranded region of the precursor and specifically recognizing bases -6 to -1. The exchange of Ccm1 for mS47 is coupled to the irreversible removal of precursor rRNA that is accompanied by conformational changes of the mitoribosomal proteins uS5m and mS26. These conformational changes signal completion of 5'-end rRNA processing through protection of the mature 5'-end of the 15S rRNA and stabilization of mS47. The removal of the 5' precursor together with the dissociation of Ccm1 may be catalyzed by the 5'-3' exoribonuclease Pet127. Involved in the specific removal of group I introns in mitochondrial encoded transcripts. The protein is Mitochondrial 15S rRNA processing factor CCM1 (CCM1) of Debaryomyces hansenii (strain ATCC 36239 / CBS 767 / BCRC 21394 / JCM 1990 / NBRC 0083 / IGC 2968) (Yeast).